We begin with the raw amino-acid sequence, 420 residues long: Phosphoglycerate kinase (420 aa).

Positions 26, 27, 28, 29, 42, 43, 66, 67, 69, 70, 125, 126, 173, and 174 each coordinate (2R)-3-phosphoglycerate. Phosphotyrosine is present on Tyr-199. A Phosphoserine modification is found at Ser-206. The tract at residues 209–228 (KPFLAILGGAKVSDKIKLIE) is calmodulin binding. Residue Gly-217 participates in ADP binding. Gly-217 is a binding site for CDP. AMP-binding residues include Ala-218 and Lys-219. An ATP-binding site is contributed by Ala-218. Mg(2+) is bound at residue Ala-218. Asp-222 lines the CDP pocket. Residue Asp-222 participates in Mg(2+) binding. Lys-223 contributes to the AMP binding site. Lys-223 contributes to the ATP binding site. Residue Gly-241 coordinates ADP. CDP is bound at residue Gly-241. Gly-242 and Gly-316 together coordinate AMP. Residues Gly-242 and Gly-316 each contribute to the ATP site. CDP-binding residues include Gly-341 and Phe-346. An ADP-binding site is contributed by Phe-346. Glu-347 provides a ligand contact to AMP. Glu-347, Asp-378, and Thr-379 together coordinate ATP. Asp-378 lines the Mg(2+) pocket. Position 393 is a phosphoserine (Ser-393).

This sequence belongs to the phosphoglycerate kinase family. As to quaternary structure, monomer. Interacts with calmodulin in the presence of Ca(2+). Requires Mg(2+) as cofactor.

It localises to the cytoplasm. The enzyme catalyses (2R)-3-phosphoglycerate + ATP = (2R)-3-phospho-glyceroyl phosphate + ADP. Its pathway is carbohydrate degradation; glycolysis; pyruvate from D-glyceraldehyde 3-phosphate: step 2/5. In Dictyostelium discoideum (Social amoeba), this protein is Phosphoglycerate kinase.